The following is a 446-amino-acid chain: 5-methylthioadenosine/S-adenosylhomocysteine deaminase (446 aa).

Residues His-72 and His-74 each coordinate Zn(2+). Substrate-binding residues include Glu-101 and His-194. A Zn(2+)-binding site is contributed by His-221. Residues Glu-224 and Asp-309 each coordinate substrate. Position 309 (Asp-309) interacts with Zn(2+).

This sequence belongs to the metallo-dependent hydrolases superfamily. MTA/SAH deaminase family. Zn(2+) serves as cofactor.

The catalysed reaction is S-adenosyl-L-homocysteine + H2O + H(+) = S-inosyl-L-homocysteine + NH4(+). It catalyses the reaction S-methyl-5'-thioadenosine + H2O + H(+) = S-methyl-5'-thioinosine + NH4(+). Catalyzes the deamination of 5-methylthioadenosine and S-adenosyl-L-homocysteine into 5-methylthioinosine and S-inosyl-L-homocysteine, respectively. Is also able to deaminate adenosine. The polypeptide is 5-methylthioadenosine/S-adenosylhomocysteine deaminase (Saccharophagus degradans (strain 2-40 / ATCC 43961 / DSM 17024)).